The sequence spans 179 residues: Large ribosomal subunit protein uL5 (179 aa).

The protein belongs to the universal ribosomal protein uL5 family. Part of the 50S ribosomal subunit; part of the 5S rRNA/L5/L18/L25 subcomplex. Contacts the 5S rRNA and the P site tRNA. Forms a bridge to the 30S subunit in the 70S ribosome.

Its function is as follows. This is one of the proteins that bind and probably mediate the attachment of the 5S RNA into the large ribosomal subunit, where it forms part of the central protuberance. In the 70S ribosome it contacts protein S13 of the 30S subunit (bridge B1b), connecting the 2 subunits; this bridge is implicated in subunit movement. Contacts the P site tRNA; the 5S rRNA and some of its associated proteins might help stabilize positioning of ribosome-bound tRNAs. This chain is Large ribosomal subunit protein uL5, found in Shewanella frigidimarina (strain NCIMB 400).